We begin with the raw amino-acid sequence, 81 residues long: Large ribosomal subunit protein bL31 (81 aa).

Zn(2+)-binding residues include Cys-16, Cys-18, Cys-38, and Cys-41.

This sequence belongs to the bacterial ribosomal protein bL31 family. Type A subfamily. In terms of assembly, part of the 50S ribosomal subunit. Zn(2+) serves as cofactor.

In terms of biological role, binds the 23S rRNA. The sequence is that of Large ribosomal subunit protein bL31 from Mycobacterium marinum (strain ATCC BAA-535 / M).